The following is a 261-amino-acid chain: Cytochrome c oxidase subunit 3 (261 aa).

The Mitochondrial matrix segment spans residues 1–15 (MTHQTHAYHMVNPSP). Residues 16–34 (WPLTGALSALLMTSGLAMW) form a helical membrane-spanning segment. The Mitochondrial intermembrane portion of the chain corresponds to 35 to 40 (FHFNST). Residues 41-66 (ILLMIGLTTNTLTMYQWWRDVIREST) traverse the membrane as a helical segment. Residues 67–72 (FQGHHT) are Mitochondrial matrix-facing. Residues 73 to 105 (PTVQKGLRYGMILFIISEVLFFTGFFWAFYHSS) form a helical membrane-spanning segment. Residues 106 to 128 (LAPTPELGGCWPPTGIHPLNPLE) are Mitochondrial intermembrane-facing. Residues 129-152 (VPLLNTSVLLASGVSITWAHHSLM) form a helical membrane-spanning segment. Over 153-155 (EGN) the chain is Mitochondrial matrix. Residues 156-183 (RYPMLQALFITIALGVYFTLLQASEYYE) form a helical membrane-spanning segment. Residues 184-190 (APFTISD) are Mitochondrial intermembrane-facing. The helical transmembrane segment at 191-223 (GVYGSTFFVATGFHGLHVIIGSTFLIVCFFRQL) threads the bilayer. At 224 to 232 (KFHFTSNHH) the chain is on the mitochondrial matrix side. A helical membrane pass occupies residues 233-256 (FGFEAAAWYWHFVDVVWLFLYVSI). Topologically, residues 257–261 (YWWGS) are mitochondrial intermembrane.

The protein belongs to the cytochrome c oxidase subunit 3 family. In terms of assembly, component of the cytochrome c oxidase (complex IV, CIV), a multisubunit enzyme composed of 14 subunits. The complex is composed of a catalytic core of 3 subunits MT-CO1, MT-CO2 and MT-CO3, encoded in the mitochondrial DNA, and 11 supernumerary subunits COX4I, COX5A, COX5B, COX6A, COX6B, COX6C, COX7A, COX7B, COX7C, COX8 and NDUFA4, which are encoded in the nuclear genome. The complex exists as a monomer or a dimer and forms supercomplexes (SCs) in the inner mitochondrial membrane with NADH-ubiquinone oxidoreductase (complex I, CI) and ubiquinol-cytochrome c oxidoreductase (cytochrome b-c1 complex, complex III, CIII), resulting in different assemblies (supercomplex SCI(1)III(2)IV(1) and megacomplex MCI(2)III(2)IV(2)).

It is found in the mitochondrion inner membrane. It carries out the reaction 4 Fe(II)-[cytochrome c] + O2 + 8 H(+)(in) = 4 Fe(III)-[cytochrome c] + 2 H2O + 4 H(+)(out). Component of the cytochrome c oxidase, the last enzyme in the mitochondrial electron transport chain which drives oxidative phosphorylation. The respiratory chain contains 3 multisubunit complexes succinate dehydrogenase (complex II, CII), ubiquinol-cytochrome c oxidoreductase (cytochrome b-c1 complex, complex III, CIII) and cytochrome c oxidase (complex IV, CIV), that cooperate to transfer electrons derived from NADH and succinate to molecular oxygen, creating an electrochemical gradient over the inner membrane that drives transmembrane transport and the ATP synthase. Cytochrome c oxidase is the component of the respiratory chain that catalyzes the reduction of oxygen to water. Electrons originating from reduced cytochrome c in the intermembrane space (IMS) are transferred via the dinuclear copper A center (CU(A)) of subunit 2 and heme A of subunit 1 to the active site in subunit 1, a binuclear center (BNC) formed by heme A3 and copper B (CU(B)). The BNC reduces molecular oxygen to 2 water molecules using 4 electrons from cytochrome c in the IMS and 4 protons from the mitochondrial matrix. This chain is Cytochrome c oxidase subunit 3 (MT-CO3), found in Raphicerus campestris (Steenbok).